Consider the following 296-residue polypeptide: Ribosomal protein L11 methyltransferase (296 aa).

S-adenosyl-L-methionine contacts are provided by T145, G166, D188, and N230.

This sequence belongs to the methyltransferase superfamily. PrmA family.

It is found in the cytoplasm. It catalyses the reaction L-lysyl-[protein] + 3 S-adenosyl-L-methionine = N(6),N(6),N(6)-trimethyl-L-lysyl-[protein] + 3 S-adenosyl-L-homocysteine + 3 H(+). In terms of biological role, methylates ribosomal protein L11. This Histophilus somni (strain 2336) (Haemophilus somnus) protein is Ribosomal protein L11 methyltransferase.